The following is a 287-amino-acid chain: ATP synthase gamma chain (287 aa).

The protein belongs to the ATPase gamma chain family. F-type ATPases have 2 components, CF(1) - the catalytic core - and CF(0) - the membrane proton channel. CF(1) has five subunits: alpha(3), beta(3), gamma(1), delta(1), epsilon(1). CF(0) has three main subunits: a, b and c.

It is found in the cell inner membrane. Functionally, produces ATP from ADP in the presence of a proton gradient across the membrane. The gamma chain is believed to be important in regulating ATPase activity and the flow of protons through the CF(0) complex. This Ruthia magnifica subsp. Calyptogena magnifica protein is ATP synthase gamma chain.